The sequence spans 270 residues: tRNA (guanine-N(1)-)-methyltransferase (270 aa).

Residues G119 and I139–I144 contribute to the S-adenosyl-L-methionine site.

It belongs to the RNA methyltransferase TrmD family. As to quaternary structure, homodimer.

The protein localises to the cytoplasm. It carries out the reaction guanosine(37) in tRNA + S-adenosyl-L-methionine = N(1)-methylguanosine(37) in tRNA + S-adenosyl-L-homocysteine + H(+). Specifically methylates guanosine-37 in various tRNAs. The polypeptide is tRNA (guanine-N(1)-)-methyltransferase (Nitrosomonas europaea (strain ATCC 19718 / CIP 103999 / KCTC 2705 / NBRC 14298)).